The sequence spans 104 residues: Phycoerythrin alpha-2 chain, chloroplastic (104 aa).

The N-terminal 37 residues, 1–37 (MSAKIIAFSAVVATASAFAPTAGFVPRLRSGATSVNM), are a transit peptide targeting the chloroplast. A 5-hydroxylysine modification is found at Lys-41. 15,16-dihydrobiliverdin is bound by residues Cys-56 and Arg-58. The segment at 61-63 (KEY) is 15,16-dihydrobiliverdin chromophore. Lys-78 contacts 15,16-dihydrobiliverdin.

This sequence belongs to the phycoerythrin family. Heterotetramer of 2 different alpha chains and 2 identical beta chains. The subunit composition could comprise of any combination of 2 out of 4 different alpha units with an invariant beta unit. Post-translationally, contains one covalently linked 15,16-dihydrobiliverdin chromophore.

Its subcellular location is the plastid. The protein localises to the chloroplast thylakoid membrane. Its function is as follows. Light-harvesting photosynthetic tetrapyrrole chromophore-protein from the phycobiliprotein complex. The chain is Phycoerythrin alpha-2 chain, chloroplastic (cpeA2) from Rhodomonas sp. (strain CS 24) (Chroomonas sp. (strain CS24)).